The chain runs to 331 residues: Hyaluronidase (331 aa).

Intrachain disulfides connect Cys-19/Cys-308 and Cys-185/Cys-197. A glycan (N-linked (GlcNAc...) asparagine) is linked at Asn-79. Glu-109 functions as the Proton donor in the catalytic mechanism. Asn-325 carries N-linked (GlcNAc...) asparagine glycosylation.

This sequence belongs to the glycosyl hydrolase 56 family. In terms of tissue distribution, expressed by the venom gland.

Its subcellular location is the secreted. It carries out the reaction Random hydrolysis of (1-&gt;4)-linkages between N-acetyl-beta-D-glucosamine and D-glucuronate residues in hyaluronate.. Hydrolyzes high molecular weight hyaluronic acid to produce small oligosaccharides. This is Hyaluronidase from Dolichovespula maculata (Bald-faced hornet).